Consider the following 505-residue polypeptide: L-carnitine/gamma-butyrobetaine antiporter (505 aa).

12 helical membrane passes run 10 to 30, 51 to 71, 92 to 112, 143 to 163, 195 to 215, 231 to 251, 263 to 283, 316 to 336, 347 to 367, 403 to 423, 446 to 466, and 475 to 495; these read IEPKVFFPPLIIVGILCWLTV, WGWAFEWYMVVMLFGWFWLVF, IFMMFASCTSAAVLFWGSIEI, GPLPWATYSFLSVAFAYFFFV, FYLVALIFAMGTSLGLATPLV, LDAIIITCWIILNAICVACGL, SYLSFLMLGWVFIVSGASFIM, WTVFYWAWWVIYAIQMSIFLA, LCFGMVMGLTASTWILWTVLG, LSTATMWGFFILCFIATVTLI, LLVRIGWSVLVGIIGIVLLAL, and AIIAGGCPLFFINIMVTLSFI.

It belongs to the BCCT transporter (TC 2.A.15) family. CaiT subfamily. In terms of assembly, homotrimer.

Its subcellular location is the cell inner membrane. It carries out the reaction 4-(trimethylamino)butanoate(in) + (R)-carnitine(out) = 4-(trimethylamino)butanoate(out) + (R)-carnitine(in). It participates in amine and polyamine metabolism; carnitine metabolism. In terms of biological role, catalyzes the exchange of L-carnitine for gamma-butyrobetaine. This Salmonella choleraesuis (strain SC-B67) protein is L-carnitine/gamma-butyrobetaine antiporter.